The following is a 218-amino-acid chain: 4-coumaroyl-homoserine lactone synthase (218 aa).

The protein belongs to the autoinducer synthase family.

The enzyme catalyses 4-coumaroyl-CoA + S-adenosyl-L-methionine = N-(4-coumaroyl)-L-homoserine lactone + S-methyl-5'-thioadenosine + CoA + H(+). In terms of biological role, catalyzes the synthesis of 4-coumaroyl-homoserine lactone, a quorum-sensing (QS) autoinducer molecule which binds to RpaR transcriptional regulator to regulate expression of QS-dependent genes. This chain is 4-coumaroyl-homoserine lactone synthase, found in Rhodopseudomonas palustris (strain ATCC BAA-98 / CGA009).